Consider the following 481-residue polypeptide: Proline--tRNA ligase (481 aa).

It belongs to the class-II aminoacyl-tRNA synthetase family. ProS type 3 subfamily. In terms of assembly, homodimer.

It localises to the cytoplasm. The catalysed reaction is tRNA(Pro) + L-proline + ATP = L-prolyl-tRNA(Pro) + AMP + diphosphate. Catalyzes the attachment of proline to tRNA(Pro) in a two-step reaction: proline is first activated by ATP to form Pro-AMP and then transferred to the acceptor end of tRNA(Pro). In Thermococcus kodakarensis (strain ATCC BAA-918 / JCM 12380 / KOD1) (Pyrococcus kodakaraensis (strain KOD1)), this protein is Proline--tRNA ligase.